The chain runs to 362 residues: Chorismate synthase (362 aa).

NADP(+) contacts are provided by Arg-48 and Arg-54. FMN contacts are provided by residues 125-127, 238-239, Gly-278, 293-297, and Arg-319; these read RSS, NA, and KPTSS.

This sequence belongs to the chorismate synthase family. As to quaternary structure, homotetramer. FMNH2 is required as a cofactor.

It carries out the reaction 5-O-(1-carboxyvinyl)-3-phosphoshikimate = chorismate + phosphate. Its pathway is metabolic intermediate biosynthesis; chorismate biosynthesis; chorismate from D-erythrose 4-phosphate and phosphoenolpyruvate: step 7/7. In terms of biological role, catalyzes the anti-1,4-elimination of the C-3 phosphate and the C-6 proR hydrogen from 5-enolpyruvylshikimate-3-phosphate (EPSP) to yield chorismate, which is the branch point compound that serves as the starting substrate for the three terminal pathways of aromatic amino acid biosynthesis. This reaction introduces a second double bond into the aromatic ring system. The chain is Chorismate synthase from Psychromonas ingrahamii (strain DSM 17664 / CCUG 51855 / 37).